A 218-amino-acid polypeptide reads, in one-letter code: Claudin-5 (218 aa).

Over 1 to 7 (MGSAALE) the chain is Cytoplasmic. A helical membrane pass occupies residues 8 to 28 (ILGLVLCLVGWVGLILACGLP). At 29–81 (MWQVTAFLDHNIVTAQTTWKGLWMSCVVQSTGHMQCKVYESVLALSAEVQAAR) the chain is on the extracellular side. Residues 82-102 (ALTVGAVLLALVALFVTLTGA) traverse the membrane as a helical segment. At 103-123 (QCTTCVAPGPVKARVALTGGA) the chain is on the cytoplasmic side. The helical transmembrane segment at 124 to 144 (LYAVCGLLALVPLCWFANIVV) threads the bilayer. The Extracellular segment spans residues 145 to 160 (REFYDPTVPVSQKYEL). The chain crosses the membrane as a helical span at residues 161–181 (GAALYIGWAASALLMCGGGLV). The Cytoplasmic portion of the chain corresponds to 182-218 (CCGAWVCTGRPEFSFPVKYSAPRRPTANGDYDKKNYV). An interactions with TJP1, TJP2 and TJP3 region spans residues 217-218 (YV).

Belongs to the claudin family. As to quaternary structure, interacts with MPDZ. Directly interacts with TJP1/ZO-1, TJP2/ZO-2 and TJP3/ZO-3. In terms of tissue distribution, widely expressed with highest levels in the lung.

It is found in the cell junction. It localises to the tight junction. The protein resides in the cell membrane. Functionally, plays a major role in tight junction-specific obliteration of the intercellular space, through calcium-independent cell-adhesion activity. The chain is Claudin-5 (Cldn5) from Mus musculus (Mouse).